A 383-amino-acid chain; its full sequence is Creatine kinase, testis isozyme (383 aa).

A Phosphagen kinase N-terminal domain is found at 14 to 100 (KRLSPEEEFP…LDPIIEDRHG (87 aa)). Basic and acidic residues predominate over residues 99-112 (HGGYKPTDKHKTDL). Residues 99–119 (HGGYKPTDKHKTDLNPDNLKG) are disordered. The region spanning 127 to 369 (YVISSRVRTG…KLLVEMEKKL (243 aa)) is the Phosphagen kinase C-terminal domain. ATP is bound by residues 130–134 (SSRVR), His193, Arg238, Arg294, 322–327 (RGTGGV), and Asp337.

This sequence belongs to the ATP:guanido phosphotransferase family. Exists in many tissues, but preferentially in testis.

The enzyme catalyses creatine + ATP = N-phosphocreatine + ADP + H(+). Reversibly catalyzes the transfer of phosphate between ATP and various phosphogens (e.g. creatine phosphate). Creatine kinase isoenzymes play a central role in energy transduction in tissues with large, fluctuating energy demands, such as skeletal muscle, heart, brain and spermatozoa. The protein is Creatine kinase, testis isozyme (tck1) of Oncorhynchus mykiss (Rainbow trout).